Reading from the N-terminus, the 629-residue chain is tRNA uridine 5-carboxymethylaminomethyl modification enzyme MnmG (629 aa).

FAD contacts are provided by residues 13–18 (GGGHAG), valine 125, and serine 180. 273–287 (GPRYCPSIEDKVMRF) lines the NAD(+) pocket. Glutamine 370 contributes to the FAD binding site.

This sequence belongs to the MnmG family. As to quaternary structure, homodimer. Heterotetramer of two MnmE and two MnmG subunits. Requires FAD as cofactor.

The protein localises to the cytoplasm. Its function is as follows. NAD-binding protein involved in the addition of a carboxymethylaminomethyl (cmnm) group at the wobble position (U34) of certain tRNAs, forming tRNA-cmnm(5)s(2)U34. This is tRNA uridine 5-carboxymethylaminomethyl modification enzyme MnmG from Pasteurella multocida (strain Pm70).